Reading from the N-terminus, the 239-residue chain is Phosphoribosylaminoimidazole-succinocarboxamide synthase (239 aa).

The protein belongs to the SAICAR synthetase family.

It carries out the reaction 5-amino-1-(5-phospho-D-ribosyl)imidazole-4-carboxylate + L-aspartate + ATP = (2S)-2-[5-amino-1-(5-phospho-beta-D-ribosyl)imidazole-4-carboxamido]succinate + ADP + phosphate + 2 H(+). It participates in purine metabolism; IMP biosynthesis via de novo pathway; 5-amino-1-(5-phospho-D-ribosyl)imidazole-4-carboxamide from 5-amino-1-(5-phospho-D-ribosyl)imidazole-4-carboxylate: step 1/2. This is Phosphoribosylaminoimidazole-succinocarboxamide synthase from Acinetobacter baumannii (strain AB307-0294).